We begin with the raw amino-acid sequence, 83 residues long: Subtilisin-chymotrypsin inhibitor CI-1B (83 aa).

The segment at 1–28 (MRSMEGSVPKYPEPTEGSIGASGAKRSW) is disordered.

The protein belongs to the protease inhibitor I13 (potato type I serine protease inhibitor) family.

Its function is as follows. Inhibits both subtilisin and chymotrypsin. The protein is Subtilisin-chymotrypsin inhibitor CI-1B of Hordeum vulgare (Barley).